A 327-amino-acid polypeptide reads, in one-letter code: Probable pectinesterase A (327 aa).

A signal peptide spans 1 to 19 (MHTPYLLGALAALAATAVG). Residue Asn84 is glycosylated (N-linked (GlcNAc...) asparagine). Gln145 contacts substrate. The Proton donor role is filled by Asp168. The active-site Nucleophile is Asp189. Substrate-binding residues include Arg249 and Trp251. Asn288 carries an N-linked (GlcNAc...) asparagine glycan.

The protein belongs to the pectinesterase family.

It is found in the secreted. It carries out the reaction [(1-&gt;4)-alpha-D-galacturonosyl methyl ester](n) + n H2O = [(1-&gt;4)-alpha-D-galacturonosyl](n) + n methanol + n H(+). The protein operates within glycan metabolism; pectin degradation; 2-dehydro-3-deoxy-D-gluconate from pectin: step 1/5. Functionally, involved in maceration and soft-rotting of plant tissue. The chain is Probable pectinesterase A (pmeA) from Aspergillus niger (strain ATCC MYA-4892 / CBS 513.88 / FGSC A1513).